The following is a 184-amino-acid chain: ATP synthase subunit delta (184 aa).

The protein belongs to the ATPase delta chain family. F-type ATPases have 2 components, F(1) - the catalytic core - and F(0) - the membrane proton channel. F(1) has five subunits: alpha(3), beta(3), gamma(1), delta(1), epsilon(1). CF(0) has four main subunits: a(1), b(1), b'(1) and c(10-14). The alpha and beta chains form an alternating ring which encloses part of the gamma chain. F(1) is attached to F(0) by a central stalk formed by the gamma and epsilon chains, while a peripheral stalk is formed by the delta, b and b' chains.

It localises to the cellular thylakoid membrane. F(1)F(0) ATP synthase produces ATP from ADP in the presence of a proton or sodium gradient. F-type ATPases consist of two structural domains, F(1) containing the extramembraneous catalytic core and F(0) containing the membrane proton channel, linked together by a central stalk and a peripheral stalk. During catalysis, ATP synthesis in the catalytic domain of F(1) is coupled via a rotary mechanism of the central stalk subunits to proton translocation. Its function is as follows. This protein is part of the stalk that links CF(0) to CF(1). It either transmits conformational changes from CF(0) to CF(1) or is implicated in proton conduction. The protein is ATP synthase subunit delta of Nostoc punctiforme (strain ATCC 29133 / PCC 73102).